The chain runs to 110 residues: Insulin (110 aa).

The first 24 residues, 1 to 24 (MAPWTRLLPLLALLSLWIPAPTRA), serve as a signal peptide directing secretion. Cystine bridges form between Cys-31–Cys-96, Cys-43–Cys-109, and Cys-95–Cys-100. Residues 57-87 (EAEDLQGKDAELGEAPGAGGLQPSALEAPLQ) constitute a propeptide, c peptide. Positions 60-80 (DLQGKDAELGEAPGAGGLQPS) are disordered.

The protein belongs to the insulin family. As to quaternary structure, heterodimer of a B chain and an A chain linked by two disulfide bonds.

The protein resides in the secreted. Insulin decreases blood glucose concentration. It increases cell permeability to monosaccharides, amino acids and fatty acids. It accelerates glycolysis, the pentose phosphate cycle, and glycogen synthesis in liver. The protein is Insulin (INS) of Felis catus (Cat).